The sequence spans 95 residues: Aspartyl/glutamyl-tRNA(Asn/Gln) amidotransferase subunit C (95 aa).

The protein belongs to the GatC family. In terms of assembly, heterotrimer of A, B and C subunits.

It catalyses the reaction L-glutamyl-tRNA(Gln) + L-glutamine + ATP + H2O = L-glutaminyl-tRNA(Gln) + L-glutamate + ADP + phosphate + H(+). The enzyme catalyses L-aspartyl-tRNA(Asn) + L-glutamine + ATP + H2O = L-asparaginyl-tRNA(Asn) + L-glutamate + ADP + phosphate + 2 H(+). Its function is as follows. Allows the formation of correctly charged Asn-tRNA(Asn) or Gln-tRNA(Gln) through the transamidation of misacylated Asp-tRNA(Asn) or Glu-tRNA(Gln) in organisms which lack either or both of asparaginyl-tRNA or glutaminyl-tRNA synthetases. The reaction takes place in the presence of glutamine and ATP through an activated phospho-Asp-tRNA(Asn) or phospho-Glu-tRNA(Gln). The sequence is that of Aspartyl/glutamyl-tRNA(Asn/Gln) amidotransferase subunit C from Rhodopseudomonas palustris (strain TIE-1).